Consider the following 446-residue polypeptide: MNQLWRASCLQVLITFLLIHQNKASEKDRFVELVDCIADSFTVVLNKSDPEVMRMISNPKSQPVVYVYGHKTRHPCGTSMKDEKGLTNFNLTIPYGSECDVTLTDLPKHRYAETTVVLEDNADLSFGKTTRLNHVFCLYTRNVKTIRFSDVSNGHEVIASTGGKPKPKVEMLFRSTDSGKTLQAARENEFVEFFIALSPDSAYHGISPKECTFSDREDISAPDAKKITFVQGGCPVNGMNDIIDPLANVNDQIYFSKFRTFRFGNQSTVFVHCQVQVCLKKDECSKTCYKKVSDSNLTAERLRFRHKRSITDLERRTTRSAPTDDNGSLDLTNSLTVVSRIESAELVASPISQPTIVDTPSEQRRDPCPKSSNMGFIPLIIMGSLASLLLFSAGAAIYFGCKLKSMKKKDSFDMMSAFSNPTVSMPVTYSHYQRSAYNASVDSLYR.

A signal peptide spans 1-24; sequence MNQLWRASCLQVLITFLLIHQNKA. The ZP domain maps to 35–295; it reads DCIADSFTVV…KTCYKKVSDS (261 aa). Cysteines 211 and 273 form a disulfide. Residues 377 to 397 form a helical membrane-spanning segment; that stretch reads IPLIIMGSLASLLLFSAGAAI.

In terms of assembly, monomer under reducing conditions. Homodimer under non-reducing conditions. May also form higher order oligomers. Post-translationally, proteolytically cleaved and secreted in vitro. As to expression, in the embryo, expressed in the excretory cell and, during dendrite formation, in the non-neuronal cells surrounding the sensory neurons, including hypodermal cells.

It is found in the cell membrane. The protein resides in the cell projection. Its subcellular location is the dendrite. The protein localises to the secreted. In terms of biological role, required for permeability of amphid and phasmid neurons to external dyes, chemotaxis to ammonium chloride, avoidance of high osmotic stimuli, male mating and dauer formation. Along with dex-1, enables neurite growth and maintenance by anchoring amphid dendritic tips during neuron cell body migration in embryonic and larval development. This chain is Protein dyf-7, found in Caenorhabditis elegans.